The sequence spans 1479 residues: Putative receptor-type tyrosine-protein phosphatase mosPTP-1 (1479 aa).

The first 28 residues, 1-28 (MKPRLLTTVTTWLALVLPVVYLSRPCQA), serve as a signal peptide directing secretion. The Extracellular segment spans residues 29-365 (LPTVNFTANY…RQSYNDYNLA (337 aa)). N-linked (GlcNAc...) asparagine glycosylation is found at asparagine 33, asparagine 40, asparagine 146, asparagine 182, asparagine 248, asparagine 294, and asparagine 306. Fibronectin type-III domains follow at residues 143–242 (KPLN…AGPS) and 243–346 (APKV…VQLN). Residues 366-386 (VMIGILICCFGLLFIVLTILL) form a helical membrane-spanning segment. Residues 387-1479 (WKKCFHAAYY…AKLRAVVRVE (1093 aa)) are Cytoplasmic-facing. Tyrosine-protein phosphatase domains lie at 452–717 (FSKE…LVEA) and 740–992 (IDSQ…LSYM). The active-site Phosphocysteine intermediate is cysteine 658.

This sequence belongs to the protein-tyrosine phosphatase family. Receptor class subfamily. Interacts with C-type lectin mosGCTL-1. Interacts with C-type lectin mosGCTL-7.

The protein resides in the cell membrane. It carries out the reaction O-phospho-L-tyrosyl-[protein] + H2O = L-tyrosyl-[protein] + phosphate. Putative protein tyrosine-protein phosphatase. Functionally, (Microbial infection) Facilitates West Nile virus infection in mosquitoes. This is Putative receptor-type tyrosine-protein phosphatase mosPTP-1 from Culex quinquefasciatus (Southern house mosquito).